Here is a 412-residue protein sequence, read N- to C-terminus: NF-kappa-B essential modulator (412 aa).

Positions 1-48 (MSRHLWKNQLSEMVQPSGGPAEDQDMLGEESSLGKPAMLHLPSEQGTP) are disordered. The tract at residues 1-197 (MSRHLWKNQL…REVLQQQHSV (197 aa)) is required for interaction with and ubiquitination by MARCHF2. 2 positions are modified to phosphoserine; by IKKB: serine 31 and serine 43. The tract at residues 44-111 (EQGTPETLQR…KLVERLSLEK (68 aa)) is interaction with CHUK/IKBKB. Residues 49–343 (ETLQRCLEEN…NKLKVGCHES (295 aa)) adopt a coiled-coil conformation. Residue serine 68 is modified to Phosphoserine. Serine 85 bears the Phosphoserine; by ATM mark. Residues lysine 111, lysine 139, lysine 143, lysine 226, and lysine 246 each participate in a glycyl lysine isopeptide (Lys-Gly) (interchain with G-Cter in ubiquitin) cross-link. The interaction with TANK stretch occupies residues 150–250 (LGELQESQSR…YDSHIKSSKG (101 aa)). Positions 242–343 (DSHIKSSKGM…NKLKVGCHES (102 aa)) are ubiquitin-binding (UBAN). Residues 246–358 (KSSKGMQLED…MRKRHVETSQ (113 aa)) are self-association. A required for interaction with TNFAIP3 region spans residues 249 to 412 (KGMQLEDLRQ…LQIHVMECIE (164 aa)). A Glycyl lysine isopeptide (Lys-Gly) (interchain with G-Cter in SUMO); alternate cross-link involves residue lysine 270. Residue lysine 270 forms a Glycyl lysine isopeptide (Lys-Gly) (interchain with G-Cter in ubiquitin); alternate linkage. Glycyl lysine isopeptide (Lys-Gly) (interchain with G-Cter in ubiquitin) cross-links involve residues lysine 276, lysine 278, lysine 285, and lysine 295. Lysine 302 participates in a covalent cross-link: Glycyl lysine isopeptide (Lys-Gly) (interchain with G-Cter in SUMO); alternate. A Glycyl lysine isopeptide (Lys-Gly) (interchain with G-Cter in ubiquitin); alternate cross-link involves residue lysine 302. Glycyl lysine isopeptide (Lys-Gly) (interchain with G-Cter in ubiquitin) cross-links involve residues lysine 314 and lysine 319. Residues 315–336 (LVERKELLQEQLEQLQREFNKL) form a leucine-zipper region. Serine 369 carries the phosphoserine; by IKKB modification. An interaction with CYLD region spans residues 375–412 (SNQRRSPPEEPPDFCCPKCQYQAPDMDTLQIHVMECIE). Serine 380 is modified (phosphoserine). The CCHC NOA-type zinc finger occupies 382–412 (PEEPPDFCCPKCQYQAPDMDTLQIHVMECIE). A Zn(2+)-binding site is contributed by cysteine 390. Residue lysine 392 forms a Glycyl lysine isopeptide (Lys-Gly) (interchain with G-Cter in ubiquitin) linkage. Cysteine 393, histidine 406, and cysteine 410 together coordinate Zn(2+).

In terms of assembly, homodimer; disulfide-linked. Component of the I-kappa-B-kinase (IKK) core complex consisting of CHUK, IKBKB and IKBKG; probably four alpha/CHUK-beta/IKBKB dimers are associated with four gamma/IKBKG subunits. The IKK core complex seems to associate with regulatory or adapter proteins to form a IKK-signalosome holo-complex. The IKK complex associates with TERF2IP/RAP1, leading to promote IKK-mediated phosphorylation of RELA/p65. Part of a complex composed of NCOA2, NCOA3, CHUK/IKKA, IKBKB, IKBKG and CREBBP. Interacts with COPS3, CYLD, NALP2, TRPC4AP and PIDD1. Interacts with ATM; the complex is exported from the nucleus. Interacts with TRAF6. Interacts with IKBKE. Interacts with TANK; the interaction is enhanced by IKBKE and TBK1. Part of a ternary complex consisting of TANK, IKBKB and IKBKG. Interacts with ZFAND5. Interacts with RIPK2. Interacts with TNIP1 and TNFAIP3; TNIP1 facilitates the TNFAIP3-mediated de-ubiquitination of IKBKG. Interacts with TNFAIP3; the interaction is induced by TNF stimulation and by polyubiquitin. Binds (via UBAN region) polyubiquitin; binds both 'Lys-63'-linked and linear polyubiquitin, with higher affinity for linear ubiquitin. Interacts with NLRP10. Interacts with TANK; this interaction increases in response to DNA damage. Interacts with USP10; this interaction increases in response to DNA damage. Interacts with ZC3H12A; this interaction increases in response to DNA damage. Interacts with IFIT5; the interaction synergizes the recruitment of IKK to MAP3K7 and enhances IKK phosphorylation. Interacts with TRIM29; this interaction induces IKBKG/NEMO ubiquitination and proteolytic degradation. Interacts with TRIM13; this interaction leads to IKBKG/NEMO ubiquitination. Interacts with ARFIP2. Interacts with RIPK1. Interacts with (ubiquitinated) BCL10; interaction with polyubiquitinated BCL10 via both 'Lys-63'-linked and linear ubiquitin is required for TCR-induced NF-kappa-B activation. Interacts with MARCHF2; during the late stages of macrophage viral and bacterial infection; the interaction leads to ubiquitination and degradation of IKBKG/NEMO. Phosphorylation at Ser-68 attenuates aminoterminal homodimerization. Post-translationally, polyubiquitinated on Lys-278 via 'Lys-63'-linked ubiquitin; the ubiquitination is mediated downstream of NOD2 and RIPK2 and probably plays a role in signaling by facilitating interactions with ubiquitin domain-containing proteins and activates the NF-kappa-B pathway. Polyubiquitinated on Lys-278 and Lys-302 through 'Lys-63'-linked ubiquitin; the ubiquitination is mediated by BCL10, MALT1 and TRAF6 and probably plays a role in signaling by facilitating interactions with ubiquitin domain-containing proteins and activates the NF-kappa-B pathway. Monoubiquitinated on Lys-270 and Lys-302; promotes nuclear export. Polyubiquitinated through 'Lys-27' by TRIM23; involved in antiviral innate and inflammatory responses. Linear polyubiquitinated on Lys-111, Lys-143, Lys-226, Lys-246, Lys-270, Lys-278, Lys-285, Lys-295, Lys-302 and Lys-319; the head-to-tail polyubiquitination is mediated by the LUBAC complex and plays a key role in NF-kappa-B activation. Deubiquitinated by USP10 in a TANK-dependent and -independent manner, leading to the negative regulation of NF-kappa-B signaling upon DNA damage. Ubiquitinated at Lys-319 by MARCHF2 following bacterial and viral infection which leads to its degradation. Polyubiquitinated via 'Lys-29'-linked ubiquitin; leading to lysosomal degradation. In terms of processing, sumoylated on Lys-270 and Lys-302 with SUMO1; the modification results in phosphorylation of Ser-85 by ATM leading to a replacement of the sumoylation by mono-ubiquitination on these residues. Neddylated by TRIM40, resulting in stabilization of NFKBIA and down-regulation of NF-kappa-B activity.

It is found in the cytoplasm. It localises to the nucleus. Regulatory subunit of the IKK core complex which phosphorylates inhibitors of NF-kappa-B thus leading to the dissociation of the inhibitor/NF-kappa-B complex and ultimately the degradation of the inhibitor. Its binding to scaffolding polyubiquitin plays a key role in IKK activation by multiple signaling receptor pathways. Can recognize and bind both 'Lys-63'-linked and linear polyubiquitin upon cell stimulation, with a much highr affinity for linear polyubiquitin. Could be implicated in NF-kappa-B-mediated protection from cytokine toxicity. Essential for viral activation of IRF3. Involved in TLR3- and IFIH1-mediated antiviral innate response; this function requires 'Lys-27'-linked polyubiquitination. The sequence is that of NF-kappa-B essential modulator (Ikbkg) from Rattus norvegicus (Rat).